The chain runs to 516 residues: Protein phosphatase 1H (516 aa).

2 disordered regions span residues 102–122 (ADPS…PSGD) and 181–202 (PPTC…SGSQ). Residues 106–506 (SVSYTPSRRR…DDISVFIIPL (401 aa)) form the PPM-type phosphatase domain. The span at 190-202 (PNPQLHASASGSQ) shows a compositional bias: polar residues.

The protein belongs to the PP2C family.

The protein localises to the nucleus. It localises to the cytoplasm. It catalyses the reaction O-phospho-L-seryl-[protein] + H2O = L-seryl-[protein] + phosphate. The enzyme catalyses O-phospho-L-threonyl-[protein] + H2O = L-threonyl-[protein] + phosphate. This is Protein phosphatase 1H (ppm1h) from Danio rerio (Zebrafish).